We begin with the raw amino-acid sequence, 142 residues long: MAPKKKVTGLIKLQIQAGQANPAPPVGPALGQHGVNIMEFCKAYNAATESQRGNVIPVEITVYEDRSFTFALKTPPAAKLLLKAAGVPKGSGEPHKTKVAKVTWDQVREIAETKKSDLNANDIDQAAKIIAGTARSMGITVE.

This sequence belongs to the universal ribosomal protein uL11 family. In terms of assembly, part of the ribosomal stalk of the 50S ribosomal subunit. Interacts with L10 and the large rRNA to form the base of the stalk. L10 forms an elongated spine to which L12 dimers bind in a sequential fashion forming a multimeric L10(L12)X complex. One or more lysine residues are methylated.

Its function is as follows. Forms part of the ribosomal stalk which helps the ribosome interact with GTP-bound translation factors. This is Large ribosomal subunit protein uL11 from Mycobacterium sp. (strain JLS).